A 224-amino-acid chain; its full sequence is Dehydration-responsive element-binding protein 1G (224 aa).

Positions 1-16 (MDVSAALSSDYSSGTP) are enriched in polar residues. The tract at residues 1–46 (MDVSAALSSDYSSGTPSPVAADADDGSSAYMTVSSAPPKRRAGRTK) is disordered. Residues 54–111 (VFKGVRRRNPGRWVCEVREPHGKQRIWLGTFETAEMAARAHDVAALALRGRAACLNFA) constitute a DNA-binding region (AP2/ERF).

Belongs to the AP2/ERF transcription factor family. ERF subfamily.

The protein resides in the nucleus. In terms of biological role, transcriptional activator that binds specifically to the DNA sequence 5'-[AG]CCGAC-3'. Binding to the C-repeat/DRE element mediates high salinity- and dehydration-inducible transcription. This chain is Dehydration-responsive element-binding protein 1G (DREB1G), found in Oryza sativa subsp. indica (Rice).